Here is a 128-residue protein sequence, read N- to C-terminus: Cystatin-2 (128 aa).

The N-terminal stretch at 1 to 19 (MSSFKVAVLLIAVYGASQG) is a signal peptide. The 88-residue stretch at 29-116 (QDPTEARFLE…CVAVIYHVPW (88 aa)) folds into the Cystatin domain. Intrachain disulfides connect C84–C96 and C107–C127.

This sequence belongs to the cystatin family. Widely expressed. Detected in salivary glands (at protein level), gut (at protein level), ovaries, and Malpighian tubules.

The protein resides in the secreted. Inhibitor of cysteine proteinases with broad specificity for mammalian cathepsins, including endopeptidases (cathepsins L and S) and exopeptidases (cathepsins B, C and H). Also inhibits endogenous cathepsin B-like and cathepsin C-like proteinases. Does not inhibit human legumain. May mimic specific host-derived cystatin(s) to interfere with its/their function in controlling cathepsin-mediated proteolysis. Affects the function of antigen-presenting mouse dendritic cells by reducing the production of the pro-inflammatory cytokines TNF and interleukin-12, and proliferation of antigen-specific CD4+ T-cells, suggesting it may suppress the host adaptive immune response. It is noteworthy that immunization of mice with this protein reduces O.moubata survival in infestation experiments. The chain is Cystatin-2 from Ornithodoros moubata (Soft tick).